The primary structure comprises 415 residues: Multidrug resistance protein MdtA (415 aa).

An N-terminal signal peptide occupies residues 1-21 (MKGSYKSRWVIVIVVVIAAIA). Disordered stretches follow at residues 32 to 60 (SRSA…GPLA) and 392 to 415 (EAQS…GARS). Basic and acidic residues predominate over residues 399–415 (PEEKATSREYAKKGARS).

It belongs to the membrane fusion protein (MFP) (TC 8.A.1) family. Part of a tripartite efflux system composed of MdtA, MdtB and MdtC.

It is found in the cell inner membrane. Functionally, the MdtABC tripartite complex confers resistance against novobiocin and deoxycholate. The sequence is that of Multidrug resistance protein MdtA from Escherichia coli (strain K12 / MC4100 / BW2952).